The primary structure comprises 196 residues: SAGA-associated factor 11 homolog (196 aa).

Residues 1 to 22 (MSAANMPTTTGAQGSGNQVPTT) are disordered. An SGF11-type zinc finger spans residues 106–127 (CTCPNCDRLVAAARFAPHLEKC). The disordered stretch occupies residues 141-196 (RLATKEGATSAHLHSSGNTGGTDDEDDVDWSSDKRRKKSNQNSRNNGSKKNNGKTF). At Ser-172 the chain carries Phosphoserine. Residues 180–196 (NQNSRNNGSKKNNGKTF) are compositionally biased toward low complexity.

This sequence belongs to the SGF11 family. Component of some SAGA transcription coactivator-HAT complexes, at least composed of Ada2b, not/nonstop, Pcaf/Gcn5, Sgf11 and Spt3. Within the SAGA complex, Sgf11, e(y)2, and not/nonstop form an additional subcomplex of SAGA called the DUB module (deubiquitination module). Interacts directly with not/nonstop. Interacts with the AMEX complex component xmas-2. Interacts with Cbp80; important for promoter recruitment of Sgf11 that is not associated with the DUB module.

It localises to the nucleus. It is found in the nucleoplasm. The protein resides in the cytoplasm. Its function is as follows. Component of the transcription regulatory histone acetylation (HAT) complex SAGA, a multiprotein complex that activates transcription by remodeling chromatin and mediating histone acetylation and deubiquitination. Within the SAGA complex, participates in a subcomplex that specifically deubiquitinates histone H2B. The SAGA complex is recruited to specific gene promoters by activators, where it is required for transcription. Required for nuclear receptor-mediated transactivation. Binds independently on SAGA to promoters in an RNA-dependent manner. Binds to mRNA and is essential for total mRNA export from the nucleus. Required to counteract heterochromatin silencing. Controls the development of neuronal connectivity in visual system by being required for accurate axon targeting in the optic lobe. Required for expression of ecdysone-induced genes such as br/broad. The polypeptide is SAGA-associated factor 11 homolog (Drosophila simulans (Fruit fly)).